Here is a 408-residue protein sequence, read N- to C-terminus: Arginine deiminase (408 aa).

Cys-397 (amidino-cysteine intermediate) is an active-site residue.

Belongs to the arginine deiminase family.

It is found in the cytoplasm. The catalysed reaction is L-arginine + H2O = L-citrulline + NH4(+). It functions in the pathway amino-acid degradation; L-arginine degradation via ADI pathway; carbamoyl phosphate from L-arginine: step 1/2. The sequence is that of Arginine deiminase from Listeria innocua serovar 6a (strain ATCC BAA-680 / CLIP 11262).